A 380-amino-acid polypeptide reads, in one-letter code: Erythronate-4-phosphate dehydrogenase (380 aa).

Substrate-binding residues include Ser-45 and Thr-66. NAD(+)-binding positions include Asp-146, Thr-174, 205–207 (ASR), and Asp-231. Arg-207 is an active-site residue. Glu-236 is an active-site residue. His-253 acts as the Proton donor in catalysis. Gly-256 lines the NAD(+) pocket. Tyr-257 serves as a coordination point for substrate.

This sequence belongs to the D-isomer specific 2-hydroxyacid dehydrogenase family. PdxB subfamily. As to quaternary structure, homodimer.

It localises to the cytoplasm. The catalysed reaction is 4-phospho-D-erythronate + NAD(+) = (R)-3-hydroxy-2-oxo-4-phosphooxybutanoate + NADH + H(+). The protein operates within cofactor biosynthesis; pyridoxine 5'-phosphate biosynthesis; pyridoxine 5'-phosphate from D-erythrose 4-phosphate: step 2/5. Functionally, catalyzes the oxidation of erythronate-4-phosphate to 3-hydroxy-2-oxo-4-phosphonooxybutanoate. In Pseudomonas putida (strain GB-1), this protein is Erythronate-4-phosphate dehydrogenase.